A 172-amino-acid polypeptide reads, in one-letter code: R-phycocyanin beta subunit (172 aa).

At asparagine 72 the chain carries N4-methylasparagine. Cysteine 82 lines the (2R,3E)-phycocyanobilin pocket. Position 153 (cysteine 153) interacts with (2R,3E)-phycoerythrobilin.

Belongs to the phycobiliprotein family. In terms of assembly, heterodimer of an alpha and a beta subunit, which further assembles into trimers and the trimers into hexamers. Post-translationally, contains two covalently linked bilin chromophores.

It localises to the cellular thylakoid membrane. In terms of biological role, light-harvesting photosynthetic bile pigment-protein from the phycobiliprotein complex (phycobilisome, PBS). Phycocyanin is the major phycobiliprotein in the PBS rod. This is R-phycocyanin beta subunit (rpcB) from Synechococcus sp. (strain WH7803).